Reading from the N-terminus, the 667-residue chain is Glycine--tRNA ligase beta subunit (667 aa).

Belongs to the class-II aminoacyl-tRNA synthetase family. In terms of assembly, tetramer of two alpha and two beta subunits.

The protein resides in the cytoplasm. It carries out the reaction tRNA(Gly) + glycine + ATP = glycyl-tRNA(Gly) + AMP + diphosphate. This is Glycine--tRNA ligase beta subunit from Rickettsia canadensis (strain McKiel).